We begin with the raw amino-acid sequence, 449 residues long: Phosphoglucosamine mutase (449 aa).

Ser101 acts as the Phosphoserine intermediate in catalysis. Mg(2+) contacts are provided by Ser101, Asp240, Asp242, and Asp244. The residue at position 101 (Ser101) is a Phosphoserine.

The protein belongs to the phosphohexose mutase family. Requires Mg(2+) as cofactor. Activated by phosphorylation.

It catalyses the reaction alpha-D-glucosamine 1-phosphate = D-glucosamine 6-phosphate. Functionally, catalyzes the conversion of glucosamine-6-phosphate to glucosamine-1-phosphate. In Streptococcus suis (strain 98HAH33), this protein is Phosphoglucosamine mutase.